The chain runs to 448 residues: Ribosomal protein uS12 methylthiotransferase RimO (448 aa).

Residues 7-119 enclose the MTTase N-terminal domain; that stretch reads QSLHLISLGC…IDSMIAQRRS (113 aa). [4Fe-4S] cluster contacts are provided by Cys16, Cys50, Cys82, Cys151, Cys155, and Cys158. The region spanning 137–366 is the Radical SAM core domain; it reads IGSSFHAYIK…NKIIQSQYKA (230 aa).

The protein belongs to the methylthiotransferase family. RimO subfamily. Requires [4Fe-4S] cluster as cofactor.

The protein localises to the cytoplasm. The catalysed reaction is L-aspartate(89)-[ribosomal protein uS12]-hydrogen + (sulfur carrier)-SH + AH2 + 2 S-adenosyl-L-methionine = 3-methylsulfanyl-L-aspartate(89)-[ribosomal protein uS12]-hydrogen + (sulfur carrier)-H + 5'-deoxyadenosine + L-methionine + A + S-adenosyl-L-homocysteine + 2 H(+). Its function is as follows. Catalyzes the methylthiolation of an aspartic acid residue of ribosomal protein uS12. The protein is Ribosomal protein uS12 methylthiotransferase RimO of Helicobacter hepaticus (strain ATCC 51449 / 3B1).